The following is a 279-amino-acid chain: Protease HtpX homolog (279 aa).

A run of 2 helical transmembrane segments spans residues 4 to 24 (IFLF…VLAV) and 34 to 54 (GSLL…SLLM). His140 serves as a coordination point for Zn(2+). The active site involves Glu141. His144 contributes to the Zn(2+) binding site. 2 helical membrane passes run 155-175 (LIQG…ANLI) and 189-209 (FLVS…IVMW). Glu215 is a binding site for Zn(2+).

The protein belongs to the peptidase M48B family. The cofactor is Zn(2+).

The protein localises to the cell inner membrane. This chain is Protease HtpX homolog, found in Neisseria gonorrhoeae (strain ATCC 700825 / FA 1090).